The primary structure comprises 517 residues: Putative transporter C543.05c (517 aa).

Helical transmembrane passes span 68 to 88 (SFGVNEVLLASVLGSVVFALL), 93 to 113 (LCIVGVTGPITVFNYTVYDIM), 121 to 141 (FPFLCWICLWSMIFHFIIAIA), 155 to 175 (CEIFGLYVAFIYLEKGVQVLC), 186 to 206 (FLSITIALLFLMVGWLCDTVG), 217 to 237 (ILLLDYGLVASIIFFSGFQHI), 269 to 289 (IPVGDVFLAIPFSIVLTILFY), 311 to 331 (GFHWDFFLLGITTGVSGILGI), 377 to 397 (SNFIQGLMTVGTMTGPLLLVL), 403 to 423 (CVLAGLFWVMGFSAIFGNGIT), and 449 to 471 (RVVWLYTILQLIGFGATFAITQV).

This sequence belongs to the anion exchanger (TC 2.A.31) family.

It is found in the vacuole membrane. This Schizosaccharomyces pombe (strain 972 / ATCC 24843) (Fission yeast) protein is Putative transporter C543.05c.